Consider the following 349-residue polypeptide: GTPase Obg (349 aa).

One can recognise an Obg domain in the interval 1–159 (MKFLDQAKVY…LWIWLRLKLI (159 aa)). One can recognise an OBG-type G domain in the interval 160 to 327 (ADAGLIGLPN…VLRALMRVVQ (168 aa)). GTP-binding positions include 166 to 173 (GLPNAGKS), 191 to 195 (FTTLH), 212 to 215 (DIPG), 279 to 282 (SQID), and 308 to 310 (SSA). Mg(2+) is bound by residues Ser173 and Thr193.

This sequence belongs to the TRAFAC class OBG-HflX-like GTPase superfamily. OBG GTPase family. In terms of assembly, monomer. Mg(2+) is required as a cofactor.

Its subcellular location is the cytoplasm. In terms of biological role, an essential GTPase which binds GTP, GDP and possibly (p)ppGpp with moderate affinity, with high nucleotide exchange rates and a fairly low GTP hydrolysis rate. Plays a role in control of the cell cycle, stress response, ribosome biogenesis and in those bacteria that undergo differentiation, in morphogenesis control. This Chelativorans sp. (strain BNC1) protein is GTPase Obg.